The following is a 700-amino-acid chain: AP-2 complex subunit beta (700 aa).

Residues 625-700 are disordered; sequence VGNSFPPTGA…RKLSMKRPFS (76 aa). A Phosphoserine modification is found at Ser649. Phosphothreonine is present on Thr652. The span at 653 to 663 shows a compositional bias: basic and acidic residues; sequence AMMDDYDKPAE. Ser683 is subject to Phosphoserine.

The protein belongs to the adaptor complexes large subunit family. Adaptor protein complex 2 (AP-2) is a heterotetramer composed of two large adaptins (alpha-type subunit APL3 and beta-type subunit APL1), a medium chain (mu-type subunit APM4) and a small adaptin (sigma-type subunit APS2). Interacts with APS2.

It localises to the cell membrane. The protein resides in the membrane. The protein localises to the coated pit. Adaptins are components of the adaptor complexes which link clathrin to receptors in coated vesicles. Clathrin-associated protein complexes are believed to interact with the cytoplasmic tails of membrane proteins, leading to their selection and concentration. Beta adaptin is a subunit of the plasma membrane adaptor. This Saccharomyces cerevisiae (strain ATCC 204508 / S288c) (Baker's yeast) protein is AP-2 complex subunit beta (APL1).